The following is a 1843-amino-acid chain: MTDPVLASQLANGTGEMDGLCSELLLIPPPLSNHGILGPVQNTCASGELAPLPADPGCLLVEATATEEGPGNMEIIVEAVTGTLSPGAPEETSGVLVKVVEVYFCERCEQSFAEPTLLSVHQCTETHIQAVQDLSSPPCSVELPPSNLALRGPLQDPSLPDSPLPCPVCRQEFVQPQALKSHFKIHRVTPNMFSCPESGCVFSAEDRKGLQNHLRQTHKAVPVPCSFRGCSLLFGSQQGMELHRQAHYPFHCSHCSFMGSNVKLFRQHQRSHGASARGELSAAVQGLPSQELLPAAKLPPGHREPSEEASTPLPGQESAEEEDAEEEESVTQKDSQKVMDKSQGAQQLEGHVGSGTESLFKTHMCPECKRCFKKRTHLVEHLHLHFPDPSLQCPNCQKFFTSKSKLKTHLLRELGEKAHRCPLCHYSAVERNALNRHMASMHEDISNFYSDTYACPVCREEFRLSQALKEHLKSHTAAAAAEPLPLHCFQEGCTYVAPDRKAFLKHLKEIHGVRAVECRHHSCPMLFATAEAMEAHHKSHYAFHCPHCDFACSNKHLFRKHKKQGHPGSEELRCTFCPFATFNPVAYQDHVGKMHAYEKIHQCSECNFATAHKRVLIRHMLLHTGEKPHKCELCDFTCRDVSYLSKHMLTHSNTKDYMCTECGYVTKWKHYLSVHMRKHAGDLRYQCNQCSYRCHRADQLSSHKLRHQGKSLMCEVCAFACKRKYELQKHMASQHHPGTPAPLYPCRYCSYQSRHKQALLSHENCKHTHLREFHCALCDYRTFSNTTLFFHKRKVHGYMPGDQVWQFCNASQELEGARQCLAPPSDSGPSSQLSAQPEREDREHEIVANSNMDQALPETNEEASPKRQDGIEAPQEDDQVDSPSLGEVEEGGCTLHLEALRVELEPETEPLPLEELTETATVEFRPLDPSGPLGTERPGGLEEPALSSFDSIETPALVAEEEPVVEKLASEPPRNPLISEEAPNTFKAALTAETVPLPPFPESESLLKAMRRQDKEQAEALVLEGRVQMVVIQGEGRAFRCPHCPFITRREKALTLHSKSGCQGRREPLLCPECGASFKQQRGLSTHMMKKCPVLLKKNKALPKPVSPTLHPQLPDNQASQDAESRKPPPLPSKVELLLPKDAPSDLPGGPGVEEPLPTPSDFPTSPPENSLPTGTSEKFHFEQGKFHCSSCTFLCSRLSSITSHVTEGCRGGRGQKRKRGRPQTHAVVLPLNNGDSTLLNTGSTESSPSDGDTAVVQKQKGALFSCPTCPFSCQQERTLRTHQTQGCPLKSGDLHCGLCPFTAPAAAALRLHQKRRHPTASPASGPRPLLQCGDCGFTCKQSRCLQQHRRLKHEGVKPHQCPFCDFSTTRRYRLEAHQSRHTGVGRIPCSSCPQTFGTNSKLRLHQLRVHDKTPTHFCPLCDYSGYLRHDITRHVNSCHQGTPSFSCTQCEAQFSSETALKQHALRRHPEPTPPSSGCPVEVTEGPLHCSHCGLLCPSPASLRGHTRKQHPRLECGACQESFPNRPALDEHRRQHHFSHRCQLCSFAARERVGLVKHYLEQHEESSTAPSDGDAGQPSLCCPFCDFACRHQLVLDHHVKGHGGTRLYKCTDCAYSTKNRQKITWHSRIHTGEKPYHCHLCAYACADPSRLKYHMRIHKEERKYLCPECGYKCKWVNQLKYHMTKHTGLKPYQCPECEYCTNRADALRVHRETRHREARAFMCEQCGKAFKTRFLLRTHLRKHSEAKPYVCNVCHRAFRWAAGLRHHALTHTDRHPFFCRLCSYKAKQKFQVVKHVRRHHPDQADPNQGVGKDPTTPTVHLHDVKLEDPSPPAPPAPSTGPEG.

2 consecutive C2H2-type zinc fingers follow at residues 103–127 (YFCERCEQSFAEPTLLSVHQCTETH) and 164–186 (LPCPVCRQEFVQPQALKSHFKIH). A disordered region spans residues 294–357 (PAAKLPPGHR…LEGHVGSGTE (64 aa)). Residues 318-329 (SAEEEDAEEEES) are compositionally biased toward acidic residues. Residues 330–340 (VTQKDSQKVMD) are compositionally biased toward basic and acidic residues. Phosphoserine is present on Ser354. The C2H2-type 3 zinc-finger motif lies at 363–385 (HMCPECKRCFKKRTHLVEHLHLH). The C2H2-type 4; degenerate zinc-finger motif lies at 391–413 (LQCPNCQKFFTSKSKLKTHLLRE). 7 consecutive C2H2-type zinc fingers follow at residues 453 to 475 (YACPVCREEFRLSQALKEHLKSH), 543 to 566 (FHCPHCDFACSNKHLFRKHKKQGH), 601 to 623 (HQCSECNFATAHKRVLIRHMLLH), 629 to 651 (HKCELCDFTCRDVSYLSKHMLTH), 657 to 679 (YMCTECGYVTKWKHYLSVHMRKH), 685 to 707 (YQCNQCSYRCHRADQLSSHKLRH), and 744 to 767 (YPCRYCSYQSRHKQALLSHENCKH). Residue Lys794 forms a Glycyl lysine isopeptide (Lys-Gly) (interchain with G-Cter in SUMO2) linkage. Disordered stretches follow at residues 819-888 (QCLA…LGEV) and 1103-1177 (PKPV…TGTS). The span at 837 to 846 (PEREDREHEI) shows a compositional bias: basic and acidic residues. A compositionally biased stretch (pro residues) spans 1157–1167 (LPTPSDFPTSP). The span at 1168–1177 (PENSLPTGTS) shows a compositional bias: polar residues. 9 C2H2-type zinc fingers span residues 1331–1354 (LQCGDCGFTCKQSRCLQQHRRLKH), 1388–1411 (IPCSSCPQTFGTNSKLRLHQLRVH), 1446–1469 (FSCTQCEAQFSSETALKQHALRRH), 1514–1537 (LECGACQESFPNRPALDEHRRQHH), 1608–1630 (YKCTDCAYSTKNRQKITWHSRIH), 1636–1658 (YHCHLCAYACADPSRLKYHMRIH), 1664–1686 (YLCPECGYKCKWVNQLKYHMTKH), 1692–1715 (YQCPECEYCTNRADALRVHRETRH), and 1721–1743 (FMCEQCGKAFKTRFLLRTHLRKH). Residues Lys1353 and Lys1402 each participate in a glycyl lysine isopeptide (Lys-Gly) (interchain with G-Cter in SUMO2) cross-link. A Glycyl lysine isopeptide (Lys-Gly) (interchain with G-Cter in SUMO2) cross-link involves residue Lys1747. Residues 1749-1771 (YVCNVCHRAFRWAAGLRHHALTH) form a C2H2-type 21 zinc finger. The segment at 1795 to 1843 (HVRRHHPDQADPNQGVGKDPTTPTVHLHDVKLEDPSPPAPPAPSTGPEG) is disordered. A compositionally biased stretch (pro residues) spans 1829 to 1843 (PSPPAPPAPSTGPEG).

It belongs to the krueppel C2H2-type zinc-finger protein family.

Its subcellular location is the nucleus. Functionally, may be involved in transcriptional regulation. The chain is Zinc finger protein 142 from Mus musculus (Mouse).